A 195-amino-acid chain; its full sequence is CD70 antigen (195 aa).

Residues 1-23 (MPEEGRPCPWVRWSGTAFQRQWP) are Cytoplasmic-facing. The helical; Signal-anchor for type II membrane protein transmembrane segment at 24 to 44 (WLLLVVFITVFCCWFHCSGLL) threads the bilayer. Residues 45 to 195 (SKQQQRLLEH…TFFGVQWICP (151 aa)) lie on the Extracellular side of the membrane. The 136-residue stretch at 58 to 193 (HTAELQLNLT…DETFFGVQWI (136 aa)) folds into the THD domain. Asparagine 65 and asparagine 116 each carry an N-linked (GlcNAc...) asparagine glycan. Cystine bridges form between cysteine 117–cysteine 153 and cysteine 135–cysteine 170. Asparagine 172 is a glycosylation site (N-linked (GlcNAc...) asparagine).

The protein belongs to the tumor necrosis factor family. Homotrimer. N-glycosylated. In terms of tissue distribution, very low level of expression. Detected in splenocytes and thymocytes.

Its subcellular location is the cell membrane. Functionally, expressed at the plasma membrane of B cells, it is the ligand of the CD27 receptor which is specifically expressed at the surface of T cells. The CD70-CD27 signaling pathway mediates antigen-specific T cell activation and expansion which in turn provides immune surveillance of B cells. The protein is CD70 antigen of Mus musculus (Mouse).